The primary structure comprises 366 residues: ADP-ribosylarginine hydrolase Tri1 (366 aa).

An N-terminal extension region spans residues 1–65; that stretch reads MIDLREDTWT…LNTPPCLIPE (65 aa). Residues 74 to 366 are ADP-ribosyl hydrolase domain; sequence GALVGLAIGD…LFYMAPEEDF (293 aa). Mg(2+)-binding residues include T116, D117, D118, D161, and D317.

This sequence belongs to the ADP-ribosylglycohydrolase family. As to quaternary structure, forms a stable complex with cognate effector protein Tre1-Sp. Requires Mg(2+) as cofactor.

It catalyses the reaction N(omega)-(ADP-D-ribosyl)-L-arginyl-[protein] + H2O = ADP-D-ribose + L-arginyl-[protein]. Functionally, immunity component of a contact-dependent interbacterial competition system (also called effector-immunity systems). Acts as an arginine mono-ADP-ribosylhydrolase, mediating the removal of mono-ADP-ribose attached to arginine residues on proteins. De-ADP-ribosylates FtsZ, is able to act on other proteins as well. Neutralizes the toxic activity of cognate toxin Tre1-Sp. Expression of this protein alone in E.coli partially protects the cells against competition by wild-type S.proteamaculans. Neutralizes Tre1-Sp both by occluding its active site via its N-terminal extension and by hydrolyzing the ADP-ribosyl moiety from FtsZ; the 2 activities are dissociable by mutagenesis. This chain is ADP-ribosylarginine hydrolase Tri1, found in Serratia proteamaculans (strain 568).